The primary structure comprises 151 residues: Arginine repressor (151 aa).

Belongs to the ArgR family.

It localises to the cytoplasm. It functions in the pathway amino-acid biosynthesis; L-arginine biosynthesis [regulation]. Its function is as follows. Regulates arginine biosynthesis genes. In Moorella thermoacetica (strain ATCC 39073 / JCM 9320), this protein is Arginine repressor.